A 69-amino-acid polypeptide reads, in one-letter code: MSAPYKNLDRDTKHTHPKLNETERNLNRGWGDVKKEELYEDLAQSDADKQLAEDKMETKYEKSKPAPSD.

2 disordered regions span residues 1–32 (MSAP…GWGD) and 44–69 (QSDA…APSD). Basic and acidic residues-rich tracts occupy residues 7 to 32 (NLDR…GWGD) and 46 to 69 (DADK…APSD).

This is an uncharacterized protein from Schizosaccharomyces pombe (strain 972 / ATCC 24843) (Fission yeast).